The chain runs to 428 residues: MGEEQVQEFKLKEDCELRFAAGEDSEVVLELVHGYAEIFGTEIILNKKYNFPAKSRVAVFTWKSATIELVGATESAYVAESTPMVIYLNIHAAMEESRKKREEQAVSNSSKPKGPRLLLVGPQDVGKTTVSRILCNYSVRHGRTPILVDLDVGQNSVSVPGSVAALLVQKTADVVDGFERNMPIVYNFGHSSPSQNLSLYETLFKALASTINSQIEQNDEARLGGMIINTCGWVDGEGYKCIVKAASAFEVDVVIVLDHERLYSDLSKELPEFVRLTHVPKSGGVEQRTAQIRSATRGENVHRYFYGTRANNLFPFTFDVPFDTVTLCKIGAEQLPDSCLPFGMEVENHETKIIIIEPSVEIKHHLFSFSRGSIAEKNVLTSSVWGFCLITEVDMEKRTISILCPQNTIPSKTLVYSEVTHLDDQIER.

2 residues coordinate ATP: glutamate 16 and arginine 56. Positions 99–118 (KKREEQAVSNSSKPKGPRLL) are disordered. 124–129 (DVGKTT) provides a ligand contact to ATP.

It belongs to the Clp1 family. Clp1 subfamily.

The protein resides in the nucleus. Its function is as follows. Required for endonucleolytic cleavage during polyadenylation-dependent pre-mRNA 3'-end formation. The sequence is that of Protein clpf-1 from Caenorhabditis briggsae.